A 406-amino-acid chain; its full sequence is Subtilisin-like protease CPC735_023170 (406 aa).

The N-terminal stretch at 1 to 20 (MRLFQSTCVLVGTVLPLFTA) is a signal peptide. Positions 21–118 (FPISSPREIE…VEPDSMAYVT (98 aa)) are excised as a propeptide. The region spanning 35–115 (KYIITFKKGI…VESVEPDSMA (81 aa)) is the Inhibitor I9 domain. Asn-125 is a glycosylation site (N-linked (GlcNAc...) asparagine). Residues 127–406 (TYGPRRISHR…NKLAYNGSGK (280 aa)) form the Peptidase S8 domain. Residues Asp-161 and His-192 each act as charge relay system in the active site. Residue Asn-239 is glycosylated (N-linked (GlcNAc...) asparagine). Residues 283–309 (NDGRDAGRNSPGSAPESITVGSINSRR) are disordered. An N-linked (GlcNAc...) asparagine glycan is attached at Asn-346. Ser-351 serves as the catalytic Charge relay system. Asn-402 is a glycosylation site (N-linked (GlcNAc...) asparagine).

The protein belongs to the peptidase S8 family.

Its subcellular location is the secreted. In terms of biological role, secreted subtilisin-like serine protease with keratinolytic activity that contributes to pathogenicity. The protein is Subtilisin-like protease CPC735_023170 of Coccidioides posadasii (strain C735) (Valley fever fungus).